A 350-amino-acid polypeptide reads, in one-letter code: Protein RecA (350 aa).

80-87 (GPESSGKT) contacts ATP.

The protein belongs to the RecA family.

It localises to the cytoplasm. Functionally, can catalyze the hydrolysis of ATP in the presence of single-stranded DNA, the ATP-dependent uptake of single-stranded DNA by duplex DNA, and the ATP-dependent hybridization of homologous single-stranded DNAs. It interacts with LexA causing its activation and leading to its autocatalytic cleavage. This is Protein RecA from Chlorobium limicola (strain DSM 245 / NBRC 103803 / 6330).